The chain runs to 683 residues: Long-chain-fatty-acid--CoA ligase 5 (683 aa).

A helical; Signal-anchor for type III membrane protein membrane pass occupies residues 12–32 (LPTPALICILTFGAAIFLWLI). At I32 the chain carries Phosphoserine. At 33-683 (TRPQPVLPLL…IDSLYEHIQD (651 aa)) the chain is on the cytoplasmic side. K361 is subject to N6-acetyllysine.

This sequence belongs to the ATP-dependent AMP-binding enzyme family. Requires Mg(2+) as cofactor.

The protein resides in the mitochondrion. Its subcellular location is the endoplasmic reticulum. It is found in the mitochondrion outer membrane. It localises to the endoplasmic reticulum membrane. The protein localises to the cell membrane. It catalyses the reaction a long-chain fatty acid + ATP + CoA = a long-chain fatty acyl-CoA + AMP + diphosphate. It carries out the reaction (5Z,8Z,11Z,14Z)-eicosatetraenoate + ATP + CoA = (5Z,8Z,11Z,14Z)-eicosatetraenoyl-CoA + AMP + diphosphate. The enzyme catalyses hexadecanoate + ATP + CoA = hexadecanoyl-CoA + AMP + diphosphate. The catalysed reaction is (E)-hexadec-2-enoate + ATP + CoA = (2E)-hexadecenoyl-CoA + AMP + diphosphate. It catalyses the reaction 15-hydroxy-(5Z,8Z,11Z,13E)-eicosatetraenoate + ATP + CoA = 15-hydroxy-(5Z,8Z,11Z,13E)-eicosatetraenoyl-CoA + AMP + diphosphate. It carries out the reaction 12-hydroxy-(5Z,8Z,10E,14Z)-eicosatetraenoate + ATP + CoA = 12-hydroxy-(5Z,8Z,10E,14Z)-eicosatetraenoyl-CoA + AMP + diphosphate. The enzyme catalyses 5-hydroxy-(6E,8Z,11Z,14Z)-eicosatetraenoate + ATP + CoA = 5-hydroxy-(6E,8Z,11Z,14Z)-eicosatetraenoyl-CoA + AMP + diphosphate. The catalysed reaction is 14,15-epoxy-(5Z,8Z,11Z)-eicosatrienoate + ATP + CoA = 14,15-epoxy-(5Z,8Z,11Z)-eicosatrienoyl-CoA + AMP + diphosphate. It catalyses the reaction 11,12-epoxy-(5Z,8Z,14Z)-eicosatrienoate + ATP + CoA = 11,12-epoxy-(5Z,8Z,14Z)-eicosatrienoyl-CoA + AMP + diphosphate. It carries out the reaction (9Z)-octadecenoate + ATP + CoA = (9Z)-octadecenoyl-CoA + AMP + diphosphate. Catalyzes the conversion of long-chain fatty acids to their active form acyl-CoAs for both synthesis of cellular lipids, and degradation via beta-oxidation. ACSL5 may activate fatty acids from exogenous sources for the synthesis of triacylglycerol destined for intracellular storage. Utilizes a wide range of saturated fatty acids with a preference for C16-C18 unsaturated fatty acids. It was suggested that it may also stimulate fatty acid oxidation. At the villus tip of the crypt-villus axis of the small intestine may sensitize epithelial cells to apoptosis specifically triggered by the death ligand TRAIL. May have a role in the survival of glioma cells. The chain is Long-chain-fatty-acid--CoA ligase 5 from Homo sapiens (Human).